Consider the following 549-residue polypeptide: Hydroxylamine reductase (549 aa).

The [4Fe-4S] cluster site is built by C5, C8, C17, and C23. H244, E268, C312, C403, C431, C456, E491, and K493 together coordinate hybrid [4Fe-2O-2S] cluster. The residue at position 403 (C403) is a Cysteine persulfide.

It belongs to the HCP family. [4Fe-4S] cluster is required as a cofactor. It depends on hybrid [4Fe-2O-2S] cluster as a cofactor.

It is found in the cytoplasm. The catalysed reaction is A + NH4(+) + H2O = hydroxylamine + AH2 + H(+). Catalyzes the reduction of hydroxylamine to form NH(3) and H(2)O. This Clostridium perfringens (strain 13 / Type A) protein is Hydroxylamine reductase.